Consider the following 386-residue polypeptide: Agamous-like MADS-box protein AGL103 (386 aa).

The region spanning 29-76 (SSSRATSLIKRQQTVFKKAKELSILCDIDVCVICYGSNGELKTWPEER) is the MADS-box domain.

In terms of assembly, interacts with MEE14/CBP1.

It is found in the nucleus. Its function is as follows. Probable transcription factor that may function in the maintenance of the proper function of the central cell in pollen tube attraction. The sequence is that of Agamous-like MADS-box protein AGL103 from Arabidopsis thaliana (Mouse-ear cress).